The primary structure comprises 450 residues: Cytidylate cyclase (450 aa).

The 140-residue stretch at 97–236 (VTMFVDIRKS…LPVDMTAKLQ (140 aa)) folds into the Guanylate cyclase domain. Residue Phe100 participates in a ribonucleoside 5'-triphosphate binding. Positions 102, 103, and 146 each coordinate Mn(2+). The AGS-C domain stretch occupies residues 318–450 (PNQFNFECFV…YRNIIGVYIK (133 aa)).

Belongs to the adenylyl cyclase class-4/guanylyl cyclase family. Pyrimidine cyclase subfamily. In terms of assembly, homodimer. Mn(2+) serves as cofactor.

It is found in the cytoplasm. It carries out the reaction CTP = 3',5'-cyclic CMP + diphosphate. With respect to regulation, in E.coli strain MG1655 transformed with both genes cCMP appears between 15 and 30 minutes after infection with phage T5 (at protein level). No cCMP accumulates in uninfected cells. In terms of biological role, pycsar (pyrimidine cyclase system for antiphage resistance) provides immunity against bacteriophage. The pyrimidine cyclase (PycC) synthesizes cyclic nucleotides in response to infection; these serve as specific second messenger signals. The signal activates the adjacent effector, leading to bacterial cell death and abortive phage infection. A clade E Pycsar system. The pyrimidine cyclase gene of a two-gene Pycsar system, generates cyclic CMP (cCMP) from CTP in response to bacteriophage infection. Has little to no activity on ATP, GTP or UTP. Expression of this and adjacent effector EcPycTM (AC P0DV25) confers resistance to bacteriophage P1 and T5; expression of this gene alone does not confer resistance. When cells expressing the Pycsar system are infected by phage T5 at low multiplicity of infection (0.2 MOI) the culture survives, at 2.0 MOI bacteria enter growth arrest. The same cells enter growth arrest after exposure to 250 uM cCMP but not cUMP; thus the effector protein responds only to the cNMP produced by its cognate NTP cyclase. Some of the cells treated with cCMP have abnormal membrane protrusions. This Escherichia coli protein is Cytidylate cyclase.